Reading from the N-terminus, the 269-residue chain is Thiazole synthase (269 aa).

Lysine 109 acts as the Schiff-base intermediate with DXP in catalysis. 1-deoxy-D-xylulose 5-phosphate is bound by residues glycine 170, 196 to 197 (AG), and 218 to 219 (NT).

It belongs to the ThiG family. In terms of assembly, homotetramer. Forms heterodimers with either ThiH or ThiS.

It localises to the plastid. The protein resides in the chloroplast. It catalyses the reaction [ThiS sulfur-carrier protein]-C-terminal-Gly-aminoethanethioate + 2-iminoacetate + 1-deoxy-D-xylulose 5-phosphate = [ThiS sulfur-carrier protein]-C-terminal Gly-Gly + 2-[(2R,5Z)-2-carboxy-4-methylthiazol-5(2H)-ylidene]ethyl phosphate + 2 H2O + H(+). The protein operates within cofactor biosynthesis; thiamine diphosphate biosynthesis. In terms of biological role, catalyzes the rearrangement of 1-deoxy-D-xylulose 5-phosphate (DXP) to produce the thiazole phosphate moiety of thiamine. Sulfur is provided by the thiocarboxylate moiety of the carrier protein ThiS. In vitro, sulfur can be provided by H(2)S. The chain is Thiazole synthase from Phaeodactylum tricornutum (strain CCAP 1055/1).